A 43-amino-acid chain; its full sequence is Photosystem II reaction center protein Psb30 (43 aa).

A helical membrane pass occupies residues 15 to 35 (VIFQLTFVSLILISGPVVIFL).

Belongs to the Psb30/Ycf12 family. PSII is composed of 1 copy each of membrane proteins PsbA, PsbB, PsbC, PsbD, PsbE, PsbF, PsbH, PsbI, PsbJ, PsbK, PsbL, PsbM, PsbT, PsbX, PsbY, PsbZ, Psb30/Ycf12, peripheral proteins PsbO, CyanoQ (PsbQ), PsbU, PsbV and a large number of cofactors. It forms dimeric complexes.

The protein resides in the cellular thylakoid membrane. A core subunit of photosystem II (PSII), probably helps stabilize the reaction center. The sequence is that of Photosystem II reaction center protein Psb30 from Picosynechococcus sp. (strain ATCC 27264 / PCC 7002 / PR-6) (Agmenellum quadruplicatum).